The sequence spans 495 residues: Amidophosphoribosyltransferase (495 aa).

The interval 1–22 (MFPPSSDLTELNDGQPLSGHHA) is disordered. Residues 1 to 28 (MFPPSSDLTELNDGQPLSGHHADKPEEA) constitute a propeptide that is removed on maturation. The active-site Nucleophile is C29. Residues 29–254 (CGVFGIYAPE…AGELVHITES (226 aa)) form the Glutamine amidotransferase type-2 domain. C270 lines the [4Fe-4S] cluster pocket. Mg(2+) contacts are provided by S317, D379, and D380. The [4Fe-4S] cluster site is built by C416, C467, and C470.

In the C-terminal section; belongs to the purine/pyrimidine phosphoribosyltransferase family. Mg(2+) is required as a cofactor. It depends on [4Fe-4S] cluster as a cofactor.

The enzyme catalyses 5-phospho-beta-D-ribosylamine + L-glutamate + diphosphate = 5-phospho-alpha-D-ribose 1-diphosphate + L-glutamine + H2O. It participates in purine metabolism; IMP biosynthesis via de novo pathway; N(1)-(5-phospho-D-ribosyl)glycinamide from 5-phospho-alpha-D-ribose 1-diphosphate: step 1/2. In terms of biological role, catalyzes the formation of phosphoribosylamine from phosphoribosylpyrophosphate (PRPP) and glutamine. The sequence is that of Amidophosphoribosyltransferase from Synechocystis sp. (strain ATCC 27184 / PCC 6803 / Kazusa).